A 1438-amino-acid chain; its full sequence is DNA polymerase III PolC-type (1438 aa).

Residues 422–578 (YVVFDVETTG…YDTEATAYIF (157 aa)) enclose the Exonuclease domain.

This sequence belongs to the DNA polymerase type-C family. PolC subfamily.

The protein localises to the cytoplasm. It catalyses the reaction DNA(n) + a 2'-deoxyribonucleoside 5'-triphosphate = DNA(n+1) + diphosphate. Its function is as follows. Required for replicative DNA synthesis. This DNA polymerase also exhibits 3' to 5' exonuclease activity. The chain is DNA polymerase III PolC-type from Staphylococcus aureus (strain MRSA252).